We begin with the raw amino-acid sequence, 750 residues long: Circadian input-output histidine kinase CikA (750 aa).

Residues 1 to 173 (MLPAFSPIFR…QVIAQIRQSL (173 aa)) are N-terminal domain. Residues 174–333 (DLSEILNNAV…KNFLGQIGEH (160 aa)) form a GAF domain region. The 225-residue stretch at 385–609 (NISHELRTPL…IFTTVIPQQN (225 aa)) folds into the Histidine kinase domain. Position 388 is a phosphohistidine; by autocatalysis (H388). The psR domain, bind KaiB(fs) stretch occupies residues 604–750 (VIPQQNFPPT…VQSIQQEPLR (147 aa)). One can recognise a Response regulatory domain in the interval 631-745 (SVIVIEQDEE…LLLQRVQSIQ (115 aa)). D680 is subject to 4-aspartylphosphate.

The protein in the N-terminal section; belongs to the phytochrome family. Homodimer. Part of the circadian clock (KaiA, KaiB, KaiC, CikA, RpaA, SasA), the composition of which varies during the circadian cycle. KaiA and CikA compete for binding to KaiB(fs). Interacts with RpaA.

It carries out the reaction ATP + protein L-histidine = ADP + protein N-phospho-L-histidine.. Functions in an input pathway to the Kai circadian clock. Senses oxidized quinones via its C-terminal pseudo-receiver domain, providing a link between cell metabolism and the clock. Affects the ratio of phosphorylated to unphosphorylated KaiC, binds quinones via its pseudo-receptor domain. Quinone-binding destabilizes the protein rapidly. Autophosphorylates, does not transfer the phosphate to its pseudo-receiver (PsR) domain. May play a role in cell division. In terms of biological role, also functions in a two-component CikA/RpaA output pathway from the circadian clock, negatively regulating kaiBC expression independently of labA and of sasA. One of three clock output pathways. Dephosphorylates phospho-RpaA, enhanced by KaiB and KaiC, has only modest kinase activity on RpaA. This Synechocystis sp. (strain ATCC 27184 / PCC 6803 / Kazusa) protein is Circadian input-output histidine kinase CikA.